A 441-amino-acid chain; its full sequence is Peroxisome proliferator-activated receptor delta (441 aa).

A compositionally biased stretch (acidic residues) spans 1–22 (MEQPQEEAPEVREEEEKEEVAE). A disordered region spans residues 1-54 (MEQPQEEAPEVREEEEKEEVAEAEGAPELNGGPQHALPSSSYTDLSRSSSPPSL). Positions 37–54 (LPSSSYTDLSRSSSPPSL) are enriched in low complexity. A DNA-binding region (nuclear receptor) is located at residues 71 to 145 (NMECRVCGDK…LGMSHNAIRF (75 aa)). NR C4-type zinc fingers lie at residues 74-94 (CRVC…CEGC) and 111-133 (CERS…FQKC). Residues 211 to 439 (FVIHDIETLW…HPLLQEIYKD (229 aa)) enclose the NR LBD domain.

This sequence belongs to the nuclear hormone receptor family. NR1 subfamily. Heterodimer with the retinoid X receptor. Interacts (via domain NR LBD) with CRY1 and CRY2 in a ligand-dependent manner. Post-translationally, 'Lys-48'-linked polyubiquitinated; leading to proteasomal degradation. Deubiquitinated and stabilized by OTUD3. As to expression, ubiquitous with maximal levels in placenta and skeletal muscle.

It localises to the nucleus. In terms of biological role, ligand-activated transcription factor key mediator of energy metabolism in adipose tissues. Receptor that binds peroxisome proliferators such as hypolipidemic drugs and fatty acids. Has a preference for poly-unsaturated fatty acids, such as gamma-linoleic acid and eicosapentanoic acid. Once activated by a ligand, the receptor binds to promoter elements of target genes. Regulates the peroxisomal beta-oxidation pathway of fatty acids. Functions as transcription activator for the acyl-CoA oxidase gene. Decreases expression of NPC1L1 once activated by a ligand. In Homo sapiens (Human), this protein is Peroxisome proliferator-activated receptor delta.